The sequence spans 379 residues: Stimulator of interferon genes protein (379 aa).

Over 1-23 (MPQDPSTRSSPARLLIPEPRAGR) the chain is Cytoplasmic. The chain crosses the membrane as a helical span at residues 24–40 (ARHAACVLLAVCFVVLF). The Lumenal portion of the chain corresponds to 41-50 (LSGEPLAPII). Residues 51–75 (RSVCTQLAALQLGVLLKGCCCLAEE) form a helical membrane-spanning segment. Topologically, residues 76–97 (IFHLHSRHHGSLWQVLCSCFPP) are cytoplasmic. Residues 98-111 (RWYLALLLVGGSAY) traverse the membrane as a helical segment. Residues 112-121 (LDPPEDNGHS) lie on the Lumenal side of the membrane. The chain crosses the membrane as a helical span at residues 122–139 (PRLALTLSCLCQLLVLAL). At 140 to 379 (GLQKLSAVEV…LPQPLRSDCP (240 aa)) the chain is on the cytoplasmic side. Residues 158 to 345 (KNVAHGLAWS…WHLQQQQREE (188 aa)) form a cyclic dinucleotide-binding domain (CBD) region. 3',3'-c-di-GMP is bound by residues S167, Y172, 243–246 (RVYK), and S268. 2',3'-cGAMP-binding positions include 167–172 (SYYIGY), 243–246 (RVYK), and S268. Residues 363–366 (LQVS) carry the pLxIS motif motif. Residue S366 is modified to Phosphoserine; by TBK1.

The protein belongs to the STING family. As to quaternary structure, homodimer; forms a homodimer in absence of cyclic nucleotide (c-di-GMP or cGAMP). Homotetramer; in presence of cyclic nucleotide (c-di-GMP or cGAMP), forms tetramers and higher-order oligomers through side-by-side packing. Interacts (when phosphorylated) with IRF3; following activation and phosphorylation on the pLxIS motif by TBK1, recruits IRF3. Post-translationally, phosphorylation by TBK1 leads to activation and production of IFN-beta. Following cyclic nucleotide (c-di-GMP or cGAMP)-binding, activation and translocation from the endoplasmic reticulum, STING1 is phosphorylated by TBK1 at Ser-366 in the pLxIS motif. The phosphorylated pLxIS motif constitutes an IRF3-binding motif, leading to recruitment of the transcription factor IRF3 to induce type-I interferons and other cytokines.

The protein resides in the endoplasmic reticulum membrane. The protein localises to the cytoplasm. Its subcellular location is the perinuclear region. It localises to the endoplasmic reticulum-Golgi intermediate compartment membrane. It is found in the golgi apparatus membrane. The protein resides in the cytoplasmic vesicle. The protein localises to the autophagosome membrane. The enzyme catalyses H(+)(in) = H(+)(out). Its function is as follows. Facilitator of innate immune signaling that acts as a sensor of cytosolic DNA from bacteria and viruses and promotes the production of type I interferon (IFN-alpha and IFN-beta). Innate immune response is triggered in response to non-CpG double-stranded DNA from viruses and bacteria delivered to the cytoplasm. Acts by binding cyclic dinucleotides: recognizes and binds cyclic di-GMP (c-di-GMP), a second messenger produced by bacteria, and cyclic GMP-AMP (cGAMP), a messenger produced by CGAS in response to DNA virus in the cytosol. Upon binding of c-di-GMP or cGAMP, STING1 oligomerizes and is able to activate both NF-kappa-B and IRF3 transcription pathways to induce expression of type I interferon and exert a potent anti-viral state. Exhibits 2',3' phosphodiester linkage-specific ligand recognition: can bind both 2'-3' linked cGAMP and 3'-3' linked cGAMP but is preferentially activated by 2'-3' linked cGAMP. In addition to promote the production of type I interferons, plays a direct role in autophagy. Following cGAMP-binding, STING1 buds from the endoplasmic reticulum into COPII vesicles, which then form the endoplasmic reticulum-Golgi intermediate compartment (ERGIC). The ERGIC serves as the membrane source for LC3 lipidation, leading to formation of autophagosomes that target cytosolic DNA or DNA viruses for degradation by the lysosome. Promotes autophagy by acting as a proton channel that directs proton efflux from the Golgi to facilitate LC3 lipidation. The autophagy- and interferon-inducing activities can be uncoupled and autophagy induction is independent of TBK1 phosphorylation. This Gallus gallus (Chicken) protein is Stimulator of interferon genes protein.